Here is a 268-residue protein sequence, read N- to C-terminus: UDP-2,3-diacylglucosamine hydrolase (268 aa).

Mn(2+)-binding residues include Asp-25, His-27, Asp-58, Asn-97, and His-132. Substrate is bound at residue 97 to 98 (NR). The substrate site is built by Asp-140, Ser-178, Glu-191, and His-222. His-222 and His-224 together coordinate Mn(2+).

The protein belongs to the LpxH family. It depends on Mn(2+) as a cofactor.

The protein resides in the cell inner membrane. It catalyses the reaction UDP-2-N,3-O-bis[(3R)-3-hydroxytetradecanoyl]-alpha-D-glucosamine + H2O = 2-N,3-O-bis[(3R)-3-hydroxytetradecanoyl]-alpha-D-glucosaminyl 1-phosphate + UMP + 2 H(+). Its pathway is glycolipid biosynthesis; lipid IV(A) biosynthesis; lipid IV(A) from (3R)-3-hydroxytetradecanoyl-[acyl-carrier-protein] and UDP-N-acetyl-alpha-D-glucosamine: step 4/6. Hydrolyzes the pyrophosphate bond of UDP-2,3-diacylglucosamine to yield 2,3-diacylglucosamine 1-phosphate (lipid X) and UMP by catalyzing the attack of water at the alpha-P atom. Involved in the biosynthesis of lipid A, a phosphorylated glycolipid that anchors the lipopolysaccharide to the outer membrane of the cell. This chain is UDP-2,3-diacylglucosamine hydrolase, found in Ralstonia nicotianae (strain ATCC BAA-1114 / GMI1000) (Ralstonia solanacearum).